The following is a 225-amino-acid chain: Phosphoserine phosphatase (225 aa).

At Met1 the chain carries N-acetylmethionine. The Nucleophile role is filled by Asp20. Residues Asp20 and Asp22 each contribute to the Mg(2+) site. 20 to 22 lines the L-serine pocket; that stretch reads DVD. Asp22 acts as the Proton donor in catalysis. Met52 is an O-phospho-L-serine binding site. Gly53 is a binding site for phosphate. L-serine contacts are provided by residues 109–111 and Lys158; that span reads SGG. O-phospho-L-serine is bound by residues 109–111 and Lys158; that span reads SGG. Residue Asp179 coordinates Mg(2+). Thr182 is a binding site for O-phospho-L-serine. Position 182 (Thr182) interacts with phosphate.

This sequence belongs to the HAD-like hydrolase superfamily. SerB family. In terms of assembly, homodimer. Mg(2+) serves as cofactor.

Its subcellular location is the cytoplasm. It is found in the cytosol. The enzyme catalyses O-phospho-L-serine + H2O = L-serine + phosphate. It carries out the reaction O-phospho-D-serine + H2O = D-serine + phosphate. Its pathway is amino-acid biosynthesis; L-serine biosynthesis; L-serine from 3-phospho-D-glycerate: step 3/3. Functionally, catalyzes the last irreversible step in the biosynthesis of L-serine from carbohydrates, the dephosphorylation of O-phospho-L-serine to L-serine. L-serine can then be used in protein synthesis, to produce other amino acids, in nucleotide metabolism or in glutathione synthesis, or can be racemized to D-serine, a neuromodulator. May also act on O-phospho-D-serine. The sequence is that of Phosphoserine phosphatase from Mus musculus (Mouse).